The primary structure comprises 450 residues: Probable ECA polymerase (450 aa).

11 consecutive transmembrane segments (helical) span residues 6 to 26 (FSGL…LTWF), 37 to 57 (VFFS…TSVL), 63 to 83 (VGVA…CFYA), 118 to 138 (VILM…NGFL), 155 to 175 (GVAL…VYFL), 181 to 201 (AWLF…MIVG), 207 to 227 (IIIA…ISLW), 228 to 248 (MLAA…LKRY), 341 to 361 (LVVM…GLII), 378 to 398 (YKAA…IVLA), and 410 to 430 (VFFI…YWLF).

This sequence belongs to the WzyE family. In terms of assembly, probably part of a complex composed of WzxE, WzyE and WzzE.

Its subcellular location is the cell inner membrane. It participates in bacterial outer membrane biogenesis; enterobacterial common antigen biosynthesis. Functionally, probably involved in the polymerization of enterobacterial common antigen (ECA) trisaccharide repeat units. This Escherichia coli O7:K1 (strain IAI39 / ExPEC) protein is Probable ECA polymerase.